A 448-amino-acid chain; its full sequence is UDP-glucose 6-dehydrogenase (448 aa).

Residues 2-19 (NITF…GIIM), Val11, Asp30, Lys35, Thr121, and Glu152 each bind NAD(+). Substrate contacts are provided by residues 148-152 (EFLRE), Lys204, Asn208, 249-253 (FLNAG), and Gly257. The active-site Nucleophile is the Cys260. Lys263 contacts NAD(+). Residue Lys321 coordinates substrate. Arg328 contacts NAD(+).

Belongs to the UDP-glucose/GDP-mannose dehydrogenase family.

The enzyme catalyses UDP-alpha-D-glucose + 2 NAD(+) + H2O = UDP-alpha-D-glucuronate + 2 NADH + 3 H(+). The protein operates within nucleotide-sugar biosynthesis; UDP-alpha-D-glucuronate biosynthesis; UDP-alpha-D-glucuronate from UDP-alpha-D-glucose: step 1/1. The polypeptide is UDP-glucose 6-dehydrogenase (udg) (Rickettsia felis (strain ATCC VR-1525 / URRWXCal2) (Rickettsia azadi)).